The following is a 345-amino-acid chain: UDP-3-O-acylglucosamine N-acyltransferase (345 aa).

The active-site Proton acceptor is His-241.

Belongs to the transferase hexapeptide repeat family. LpxD subfamily. In terms of assembly, homotrimer.

The enzyme catalyses a UDP-3-O-[(3R)-3-hydroxyacyl]-alpha-D-glucosamine + a (3R)-hydroxyacyl-[ACP] = a UDP-2-N,3-O-bis[(3R)-3-hydroxyacyl]-alpha-D-glucosamine + holo-[ACP] + H(+). Its pathway is bacterial outer membrane biogenesis; LPS lipid A biosynthesis. Functionally, catalyzes the N-acylation of UDP-3-O-acylglucosamine using 3-hydroxyacyl-ACP as the acyl donor. Is involved in the biosynthesis of lipid A, a phosphorylated glycolipid that anchors the lipopolysaccharide to the outer membrane of the cell. This chain is UDP-3-O-acylglucosamine N-acyltransferase, found in Desulfotalea psychrophila (strain LSv54 / DSM 12343).